A 365-amino-acid chain; its full sequence is Aminomethyltransferase (365 aa).

The protein belongs to the GcvT family. In terms of assembly, the glycine cleavage system is composed of four proteins: P, T, L and H.

The enzyme catalyses N(6)-[(R)-S(8)-aminomethyldihydrolipoyl]-L-lysyl-[protein] + (6S)-5,6,7,8-tetrahydrofolate = N(6)-[(R)-dihydrolipoyl]-L-lysyl-[protein] + (6R)-5,10-methylene-5,6,7,8-tetrahydrofolate + NH4(+). Its function is as follows. The glycine cleavage system catalyzes the degradation of glycine. The chain is Aminomethyltransferase from Yersinia pseudotuberculosis serotype O:1b (strain IP 31758).